The primary structure comprises 440 residues: DNA polymerase delta small subunit (440 aa).

Belongs to the DNA polymerase delta/II small subunit family. As to quaternary structure, heterodimer with subunits of 125 kDa and 50 kDa.

The protein localises to the nucleus. It carries out the reaction DNA(n) + a 2'-deoxyribonucleoside 5'-triphosphate = DNA(n+1) + diphosphate. Its function is as follows. The function of the small subunit is not yet clear. This chain is DNA polymerase delta small subunit (POLD2), found in Arabidopsis thaliana (Mouse-ear cress).